A 487-amino-acid polypeptide reads, in one-letter code: WD repeat, SAM and U-box domain-containing protein 1 (487 aa).

WD repeat units follow at residues Ser-10–Phe-47, Gly-52–Glu-93, Pro-95–Thr-134, Val-137–Glu-176, Ala-179–Ile-227, Gly-237–Thr-276, and Gln-279–Gly-318. The 65-residue stretch at Trp-347–Val-411 folds into the SAM domain. The region spanning Gly-416–Gln-487 is the U-box domain.

The polypeptide is WD repeat, SAM and U-box domain-containing protein 1 (wdsub1) (Danio rerio (Zebrafish)).